The primary structure comprises 1096 residues: Cohesin subunit scc-3 (1096 aa).

The span at 1 to 21 (MSETPTDQSPQRMSTRNQARV) shows a compositional bias: polar residues. 2 disordered regions span residues 1–53 (MSET…KKRA) and 67–106 (NLNN…ESAE). Positions 261–312 (IELTQSKEKTSKQIEAEKAKLKNNSAGNEKYEALVAQRTQTEERAEEIRQII) form a coiled coil. The SCD domain maps to 320–405 (FVHRYRDVVP…NKFKDRLVSM (86 aa)). Residues 1057–1096 (DNMSVRSGMTVTSNATMRSTASSTRGRGRGRGRSRIADDF) are disordered. The segment covering 1060-1073 (SVRSGMTVTSNATM) has biased composition (polar residues).

The protein belongs to the SCC3 family. In terms of assembly, component of the cohesin complex, composed of the smc-1 and smc-3 heterodimer attached via their hinge domain, scc-1 which links them, and scc-3. Interacts with scc-1, smc-1 and tim-1. As to expression, expressed in gonadal cells.

It is found in the nucleus. The protein localises to the chromosome. Its function is as follows. Component of the cohesin complex, a complex required for the cohesion of sister chromatids after DNA replication. The cohesin complex apparently forms a large proteinaceous ring within which sister chromatids can be trapped. At anaphase, the scc-1 subunit of the complex is cleaved and dissociates from chromatin, allowing sister chromatids to segregate. The cohesin complex may also play a role in spindle pole assembly during mitosis. Plays an essential role in cell division during embryonic development. Required for the assembly of the synaptonemal complex between homologous chromosomes to promote sister chromatid cohesion during mitosis and meiosis. Has a role in stabilization of homologous chromosome associations during meiotic synapsis. Required for chromosome segregation during mitosis and meiosis. Plays a role in DNA double-strand break (DSB) repair during meiotic recombination and promotes the assembly of the 9-1-1 cell-cycle checkpoint response complex which is required for inducing apoptosis in response to DNA damage, at DNA damage sites. The chain is Cohesin subunit scc-3 from Caenorhabditis elegans.